The chain runs to 607 residues: Replication factor C large subunit (607 aa).

55-62 (GPAGIGKT) lines the ATP pocket. The interval 468-607 (EEEKPQKEGS…PKNQKTLFDF (140 aa)) is disordered. The span at 506-518 (TSEKKENSEKKEN) shows a compositional bias: basic and acidic residues. A compositionally biased stretch (polar residues) spans 548–558 (SESVEQKTSSK).

This sequence belongs to the activator 1 small subunits family. RfcL subfamily. In terms of assembly, heteromultimer composed of small subunits (RfcS) and large subunits (RfcL).

Its function is as follows. Part of the RFC clamp loader complex which loads the PCNA sliding clamp onto DNA. In Methanosarcina acetivorans (strain ATCC 35395 / DSM 2834 / JCM 12185 / C2A), this protein is Replication factor C large subunit.